A 728-amino-acid polypeptide reads, in one-letter code: NF-kappa-B inhibitor zeta (728 aa).

The segment at 45–107 (GAGDTGYLSA…PHMGVGRQQR (63 aa)) is disordered. Over residues 53–82 (SAVPSAPGSPGSDSSDFSSTSSVSSCGAVE) the composition is skewed to low complexity. The segment covering 83–96 (SRPRGGARAERPQV) has biased composition (basic and acidic residues). Residues 107–129 (RGPFQGVRVKNSVKELLLHIRSN) enclose the OCA domain. The Nuclear localization signal signature appears at 163 to 178 (KRKGPDPLSDGPVCKR). Composition is skewed to polar residues over residues 241–250 (PTVPQNSPRD) and 268–288 (QPFQ…YQYS). A disordered region spans residues 241 to 334 (PTVPQNSPRD…SQSPKYDSNL (94 aa)). Low complexity predominate over residues 303 to 315 (QQQHQQNYPHNSP). Over residues 316–330 (LQFSPYSRMSQSPKY) the composition is skewed to polar residues. Residues 329–403 (KYDSNLFDTH…VGVHDVGSHS (75 aa)) are required for transcriptional activity. The tract at residues 414–728 (MGSPMNTTQL…KSIQQRAPPY (315 aa)) is interaction with NFKB1/p50. ANK repeat units lie at residues 453-482 (DGDT…ALHM), 489-518 (NGQS…QVNT), 522-551 (WGRT…RSNQ), 561-589 (DGLT…SHSP), 591-617 (VQDL…AVEA), 622-651 (SGRT…CLSF), and 658-691 (NGNT…DPST).

In terms of assembly, interacts with NFKB1/p50. Interacts with RELA. Interacts with AKIRIN2. As to expression, expressed in kidney, liver, lung and heart. Expressed at very low levels in skeletal muscle, spleen and brain.

Its subcellular location is the nucleus. Involved in regulation of NF-kappa-B transcription factor complexes. Inhibits NF-kappa-B activity without affecting its nuclear translocation upon stimulation. Inhibits DNA-binding of RELA and NFKB1/p50, and of the NF-kappa-B p65-p50 heterodimer and the NF-kappa-B p50-p50 homodimer. Also seems to activate NF-kappa-B-mediated transcription. In vitro, upon association with NFKB1/p50 has transcriptional activation activity and, together with NFKB1/p50 and RELA, is recruited to LCN2 promoters. Promotes transcription of LCN2 and DEFB4. Is recruited to IL-6 promoters and activates IL-6 but decreases TNF-alpha production in response to LPS. Seems to be involved in the induction of inflammatory genes activated through TLR/IL-1 receptor signaling. Involved in the induction of T helper 17 cells (Th17) differentiation upon recognition of antigen by T cell antigen receptor (TCR). The protein is NF-kappa-B inhibitor zeta (Nfkbiz) of Mus musculus (Mouse).